The following is a 541-amino-acid chain: Histone acetyltransferase ESA1 (541 aa).

The span at 1-11 (MAVAEIKKEKG) shows a compositional bias: basic and acidic residues. The disordered stretch occupies residues 1–31 (MAVAEIKKEKGSSLSPEPSSPIQILSTEPDA). The span at 12–30 (SSLSPEPSSPIQILSTEPD) shows a compositional bias: polar residues. A Tudor-knot domain is found at 47–97 (PGCKVHVSKDGEFRLAEILQEHIKKGRKVFYVHYQDFNKRLDEWIELDRID). Positions 111–154 (TKENKSKKKSKSKGQTKLSKNNTTANSTTGTPQPSDGQPIMGDD) are disordered. Positions 115-124 (KSKKKSKSKG) are enriched in basic residues. Over residues 131-146 (NNTTANSTTGTPQPSD) the composition is skewed to polar residues. The MYST-type HAT domain occupies 196–529 (ARVRNLSTII…LNPKLLHWTP (334 aa)). A C2HC MYST-type; degenerate zinc finger spans residues 229 to 254 (IYICDFTLSYFGSKKQFERFRSKCSM). Positions 279–300 (RTWCRNLCLLSKLFLDHKTLYY) match the ESA1-RPD3 motif motif. N6-acetyllysine; by autocatalysis is present on Lys-296. Acetyl-CoA contacts are provided by residues 337 to 341 (ACILT) and 346 to 352 (QKRGFGK). Catalysis depends on Glu-372, which acts as the Proton donor/acceptor. Acetyl-CoA is bound at residue Ser-376. A disordered region spans residues 413–438 (YDEAENGKDSSATPTPGPGSNASQSS).

The protein belongs to the MYST (SAS/MOZ) family. Component of the NuA4 histone acetyltransferase complex. In terms of processing, autoacetylation at Lys-296 is required for proper function.

Its subcellular location is the nucleus. The protein resides in the chromosome. It carries out the reaction L-lysyl-[histone] + acetyl-CoA = N(6)-acetyl-L-lysyl-[histone] + CoA + H(+). It catalyses the reaction L-lysyl-[protein] + acetyl-CoA = N(6)-acetyl-L-lysyl-[protein] + CoA + H(+). The enzyme catalyses 2-hydroxyisobutanoyl-CoA + L-lysyl-[protein] = N(6)-(2-hydroxyisobutanoyl)-L-lysyl-[protein] + CoA + H(+). The catalysed reaction is (2E)-butenoyl-CoA + L-lysyl-[protein] = N(6)-(2E)-butenoyl-L-lysyl-[protein] + CoA + H(+). Catalytic component of the NuA4 histone acetyltransferase (HAT) complex which is involved in epigenetic transcriptional activation of selected genes principally by acetylation of nucleosomal histones H4, H3, H2B, H2A and H2A variant H2A.Z. Acetylates histone H4 to form H4K5ac, H4K8ac, H4K12ac and H4K16ac, histone H3 to form H3K14ac, and histone H2A to form H2AK4ac and H2AK7ac. The NuA4 complex is involved in the DNA damage response and is required for chromosome segregation. The NuA4 complex plays a direct role in repair of DNA double-strand breaks (DSBs) through homologous recombination. Recruitment to promoters depends on H3K4me. Also acetylates non-histone proteins. In addition to protein acetyltransferase, can use different acyl-CoA substrates, such as 2-hydroxyisobutanoyl-CoA (2-hydroxyisobutyryl-CoA) or (2E)-butenoyl-CoA (crotonyl-CoA), and is able to mediate protein 2-hydroxyisobutyrylation and crotonylation, respectively. In Candida albicans (strain SC5314 / ATCC MYA-2876) (Yeast), this protein is Histone acetyltransferase ESA1 (ESA1).